The sequence spans 110 residues: MSLTEARFHDLVDATQQTLEDIFDESDLDIDLESSAGVLTVKFDNGSQVIFSRQEPLRQLWLAARSGGFHFDYDEESERWMCDKSEEQLGEMLERIVLEQADIKLEFEGL.

It belongs to the frataxin family.

Involved in iron-sulfur (Fe-S) cluster assembly. May act as a regulator of Fe-S biogenesis. The sequence is that of Iron-sulfur cluster assembly protein CyaY from Pseudomonas fluorescens (strain ATCC BAA-477 / NRRL B-23932 / Pf-5).